Consider the following 219-residue polypeptide: Tritrans,polycis-undecaprenyl-diphosphate synthase (geranylgeranyl-diphosphate specific) (219 aa).

Asp-12 is a catalytic residue. Mg(2+) is bound at residue Asp-12. Substrate is bound by residues 13 to 16 (GNRR), Trp-17, and 59 to 61 (SRD). Asn-62 acts as the Proton acceptor in catalysis. Substrate is bound by residues Arg-66, Arg-168, and 174-176 (RLS). Residue Glu-187 coordinates Mg(2+).

Belongs to the UPP synthase family. In terms of assembly, homodimer. Mg(2+) serves as cofactor.

It catalyses the reaction geranylgeranyl diphosphate + 7 isopentenyl diphosphate = tri-trans,hepta-cis-undecaprenyl diphosphate + 7 diphosphate. Its function is as follows. Catalyzes the sequential condensation of isopentenyl diphosphate (IPP) with geranylgeranyl diphosphate (GGPP) to yield (2Z,6Z,10Z,14Z,18Z,22Z,26Z,30E,34E,38E)-undecaprenyl diphosphate (tritrans,heptacis-UPP). It is probably the precursor of glycosyl carrier lipids. In Aeropyrum pernix (strain ATCC 700893 / DSM 11879 / JCM 9820 / NBRC 100138 / K1), this protein is Tritrans,polycis-undecaprenyl-diphosphate synthase (geranylgeranyl-diphosphate specific).